The following is a 350-amino-acid chain: UDP-N-acetylenolpyruvoylglucosamine reductase (350 aa).

The 172-residue stretch at 24 to 195 folds into the FAD-binding PCMH-type domain; it reads HVEATARWLL…VAVEFNLPLL (172 aa). Residue R172 is part of the active site. S245 (proton donor) is an active-site residue. E342 is an active-site residue.

The protein belongs to the MurB family. FAD is required as a cofactor.

Its subcellular location is the cytoplasm. It catalyses the reaction UDP-N-acetyl-alpha-D-muramate + NADP(+) = UDP-N-acetyl-3-O-(1-carboxyvinyl)-alpha-D-glucosamine + NADPH + H(+). Its pathway is cell wall biogenesis; peptidoglycan biosynthesis. Cell wall formation. This Xanthomonas euvesicatoria pv. vesicatoria (strain 85-10) (Xanthomonas campestris pv. vesicatoria) protein is UDP-N-acetylenolpyruvoylglucosamine reductase.